Consider the following 928-residue polypeptide: ATP-dependent DNA helicase PIF5 (928 aa).

Residues 1–49 (MLSRLSAVWRPSRVALRIQRVDFTTCGNRLNRSTQPNEPPLVSGIAARS) constitute a mitochondrion transit peptide. Disordered regions lie at residues 29-141 (RLNR…DVAI) and 176-231 (LRAK…FSDA). Residues 52–61 (AKAEPVEKRG) show a composition bias toward basic and acidic residues. Residue 264-271 (GGAGSGKS) coordinates ATP. 4 disordered regions span residues 389–421 (PIPP…APSK), 481–513 (KSSA…AAAE), 545–572 (IYPS…EDTM), and 585–607 (STHE…SQPW). Over residues 550–566 (NDGSSQQTGSSNGANSV) the composition is skewed to polar residues. The DNA-binding element occupies 858–877 (QAYVALSRSTRLDNIRLLDF). Positions 898-928 (EELDNEIEDDGTEGDEEALEGDGEYEGEVEE) are disordered.

This sequence belongs to the helicase family. PIF1 subfamily. As to quaternary structure, monomer. Mg(2+) serves as cofactor.

It is found in the mitochondrion. It catalyses the reaction Couples ATP hydrolysis with the unwinding of duplex DNA at the replication fork by translocating in the 5'-3' direction. This creates two antiparallel DNA single strands (ssDNA). The leading ssDNA polymer is the template for DNA polymerase III holoenzyme which synthesizes a continuous strand.. The enzyme catalyses ATP + H2O = ADP + phosphate + H(+). DNA-dependent ATPase and 5'-3' DNA helicase required for the maintenance of mitochondrial (kinetoplast) genome stability. Involved in processing of minicircle Okazaki fragments. The protein is ATP-dependent DNA helicase PIF5 of Trypanosoma brucei brucei (strain 927/4 GUTat10.1).